We begin with the raw amino-acid sequence, 204 residues long: Putative 3-methyladenine DNA glycosylase (204 aa).

Belongs to the DNA glycosylase MPG family.

The polypeptide is Putative 3-methyladenine DNA glycosylase (Bacillus cytotoxicus (strain DSM 22905 / CIP 110041 / 391-98 / NVH 391-98)).